Here is a 122-residue protein sequence, read N- to C-terminus: Ribosomal silencing factor RsfS (122 aa).

Belongs to the Iojap/RsfS family. In terms of assembly, interacts with ribosomal protein uL14 (rplN).

It localises to the cytoplasm. Functionally, functions as a ribosomal silencing factor. Interacts with ribosomal protein uL14 (rplN), blocking formation of intersubunit bridge B8. Prevents association of the 30S and 50S ribosomal subunits and the formation of functional ribosomes, thus repressing translation. The chain is Ribosomal silencing factor RsfS from Chromobacterium violaceum (strain ATCC 12472 / DSM 30191 / JCM 1249 / CCUG 213 / NBRC 12614 / NCIMB 9131 / NCTC 9757 / MK).